The sequence spans 776 residues: Protein translocase subunit SecA 2 (776 aa).

ATP is bound by residues Gln-80, 98-102, and Asp-486; that span reads GEGKT.

Belongs to the SecA family. Monomer and homodimer. Part of the essential Sec protein translocation apparatus which comprises SecA, SecYEG and auxiliary proteins SecDF. Other proteins may also be involved.

The protein localises to the cell membrane. The protein resides in the cytoplasm. It carries out the reaction ATP + H2O + cellular proteinSide 1 = ADP + phosphate + cellular proteinSide 2.. In terms of biological role, part of the Sec protein translocase complex. Interacts with the SecYEG preprotein conducting channel. Has a central role in coupling the hydrolysis of ATP to the transfer of proteins into and across the cell membrane, serving as an ATP-driven molecular motor driving the stepwise translocation of polypeptide chains across the membrane. The sequence is that of Protein translocase subunit SecA 2 from Listeria monocytogenes serovar 1/2a (strain ATCC BAA-679 / EGD-e).